The sequence spans 284 residues: Tropomyosin (284 aa).

The stretch at 1–284 (MDAIKKKMQA…DQTFQELFGY (284 aa)) forms a coiled coil. Positions 113-142 (LEKATHTADESDRVRKVMENRSFQDEERAN) are enriched in basic and acidic residues. Residues 113–143 (LEKATHTADESDRVRKVMENRSFQDEERANT) form a disordered region.

It belongs to the tropomyosin family.

In terms of biological role, tropomyosin, in association with the troponin complex, plays a central role in the calcium dependent regulation of muscle contraction. The polypeptide is Tropomyosin (Acanthocheilonema viteae (Filarial nematode worm)).